The primary structure comprises 138 residues: Large ribosomal subunit protein bL19 (138 aa).

This sequence belongs to the bacterial ribosomal protein bL19 family.

This protein is located at the 30S-50S ribosomal subunit interface and may play a role in the structure and function of the aminoacyl-tRNA binding site. The protein is Large ribosomal subunit protein bL19 of Rickettsia africae (strain ESF-5).